The primary structure comprises 932 residues: RNA-binding protein 12 (932 aa).

The segment at 97-116 is disordered; it reads IPPANASRSGPPPSSGMSGR. Residues 98–116 are compositionally biased toward low complexity; it reads PPANASRSGPPPSSGMSGR. The 76-residue stretch at 304–379 folds into the RRM 1 domain; sequence LYVSVHGMPF…RYVEVSPATE (76 aa). Phosphoserine is present on residues S352 and S375. Residues 393–424 form a disordered region; sequence QNMGPSGQSHPPPQTLPRSKSPSGQKRSRSRS. A compositionally biased stretch (polar residues) spans 408–417; that stretch reads LPRSKSPSGQ. S420, S422, and S424 each carry phosphoserine. Residues 430–507 enclose the RRM 2 domain; the sequence is FCVYLKGLPF…RFIQVHPITK (78 aa). Residue S525 is modified to Phosphoserine. Residues 717 to 734 are compositionally biased toward low complexity; it reads NGPPFNFPGNFGGSNAFG. The tract at residues 717-853 is disordered; sequence NGPPFNFPGN…PGFASSSGKP (137 aa). Gly residues predominate over residues 783-811; that stretch reads SGFGGGPQNFGNGPGSLGGPPGFGSGPPG. A compositionally biased stretch (pro residues) spans 824–836; the sequence is AFGPGPGPGPGPG. The RRM 3 domain occupies 856–932; it reads TVIKVQNMPF…GSRKVKLVLG (77 aa).

It is found in the nucleus. The protein is RNA-binding protein 12 (RBM12) of Macaca mulatta (Rhesus macaque).